A 271-amino-acid chain; its full sequence is Endonuclease V (271 aa).

The disordered stretch occupies residues 46–67 (TRTGDAPDVDQTTLSTSADDRT). Positions 76 and 140 each coordinate Mg(2+).

This sequence belongs to the endonuclease V family. Requires Mg(2+) as cofactor.

It localises to the cytoplasm. It catalyses the reaction Endonucleolytic cleavage at apurinic or apyrimidinic sites to products with a 5'-phosphate.. Functionally, DNA repair enzyme involved in the repair of deaminated bases. Selectively cleaves double-stranded DNA at the second phosphodiester bond 3' to a deoxyinosine leaving behind the intact lesion on the nicked DNA. The protein is Endonuclease V of Haloarcula marismortui (strain ATCC 43049 / DSM 3752 / JCM 8966 / VKM B-1809) (Halobacterium marismortui).